Consider the following 135-residue polypeptide: Small ribosomal subunit protein bS18 (135 aa).

The disordered stretch occupies residues 1-65 (MARPDMGGPK…GDEGGGRRGF (65 aa)). A compositionally biased stretch (gly residues) spans 9–41 (PKTGGFGGPRSGGFGGGGGGGGGFGGGGFGGGR). The span at 42–61 (GGDRGDRGDRDDRGGDEGGG) shows a compositional bias: basic and acidic residues.

Belongs to the bacterial ribosomal protein bS18 family. As to quaternary structure, part of the 30S ribosomal subunit. Forms a tight heterodimer with protein bS6.

Its function is as follows. Binds as a heterodimer with protein bS6 to the central domain of the 16S rRNA, where it helps stabilize the platform of the 30S subunit. The sequence is that of Small ribosomal subunit protein bS18 from Anaeromyxobacter sp. (strain K).